The following is a 92-amino-acid chain: RNA-binding protein Hfq (92 aa).

Residues 9-68 (DPFLNALRRERVPVSIYLVNGIKLQGQVESFDQFVILLKNTVSQMVYKHAISTVVPARPF) form the Sm domain. Residues 68 to 92 (FNVSSHHNTPNQAAGYNASHDDSAE) form a disordered region. Positions 69–81 (NVSSHHNTPNQAA) are enriched in polar residues.

Belongs to the Hfq family. In terms of assembly, homohexamer.

Functionally, RNA chaperone that binds small regulatory RNA (sRNAs) and mRNAs to facilitate mRNA translational regulation in response to envelope stress, environmental stress and changes in metabolite concentrations. Also binds with high specificity to tRNAs. The polypeptide is RNA-binding protein Hfq (Shewanella loihica (strain ATCC BAA-1088 / PV-4)).